Consider the following 353-residue polypeptide: Suppressor of RNA-mediated gene silencing (353 aa).

It belongs to the phytoreovirus non-structural protein 10 family.

Functionally, suppressor of RNA-mediated gene silencing, also known as post-transcriptional gene silencing (PTGS), a mechanism of plant viral defense that limits the accumulation of viral RNAs. The chain is Suppressor of RNA-mediated gene silencing from Rice dwarf virus (isolate Fujian) (RDV).